Reading from the N-terminus, the 228-residue chain is MEKGVYIIGTSTDIGKTFISGLILKKLREEGRNAGYYKAVLSGAIKDKKGLIPLDCEEVMEISGLKESYENMVSYILENPYSPHLASEVEEVSISMEKIKKDYKSVRDKYDFILCEGSGGIVCPISFSEKKLMLEDIIKEFNLPIILVSNSGLGAINHTVLTVSYLRNLGLKVKGIILNKFNKSDIIHRDNKKIIKELTGVNNISTVPKIEDIEKYDLNELNEVLYGI.

ATP is bound at residue 13–18 (DIGKTF). Position 17 (threonine 17) interacts with Mg(2+). Lysine 38 is an active-site residue. Serine 42 lines the substrate pocket. Residues aspartate 55, 116–119 (EGSG), 179–180 (NK), and 208–210 (PKI) contribute to the ATP site. Mg(2+) is bound by residues aspartate 55 and glutamate 116.

The protein belongs to the dethiobiotin synthetase family. Homodimer. Mg(2+) is required as a cofactor.

It is found in the cytoplasm. It catalyses the reaction (7R,8S)-7,8-diammoniononanoate + CO2 + ATP = (4R,5S)-dethiobiotin + ADP + phosphate + 3 H(+). It participates in cofactor biosynthesis; biotin biosynthesis; biotin from 7,8-diaminononanoate: step 1/2. Its function is as follows. Catalyzes a mechanistically unusual reaction, the ATP-dependent insertion of CO2 between the N7 and N8 nitrogen atoms of 7,8-diaminopelargonic acid (DAPA, also called 7,8-diammoniononanoate) to form a ureido ring. This chain is ATP-dependent dethiobiotin synthetase BioD, found in Clostridium perfringens (strain ATCC 13124 / DSM 756 / JCM 1290 / NCIMB 6125 / NCTC 8237 / Type A).